A 126-amino-acid polypeptide reads, in one-letter code: MSDPRYQIDVSVVTRYLKDQSDPESDRFAFAYTITVQNNGSIKAKLMSRHWLITNGDGEVEEVRGAGVIGQQPTIEPGQSHTYSSGAVISTRVGTMQGSYQMFAEDGKRFEADIAPFRLAVPGALH.

Residues 2–126 (SDPRYQIDVS…FRLAVPGALH (125 aa)) enclose the ApaG domain.

The protein is Protein ApaG of Pseudomonas putida (strain W619).